A 273-amino-acid chain; its full sequence is Hydroxyethylthiazole kinase 2 (273 aa).

M45 provides a ligand contact to substrate. K120 and T173 together coordinate ATP. G200 contacts substrate.

It belongs to the Thz kinase family. It depends on Mg(2+) as a cofactor.

It carries out the reaction 5-(2-hydroxyethyl)-4-methylthiazole + ATP = 4-methyl-5-(2-phosphooxyethyl)-thiazole + ADP + H(+). It participates in cofactor biosynthesis; thiamine diphosphate biosynthesis; 4-methyl-5-(2-phosphoethyl)-thiazole from 5-(2-hydroxyethyl)-4-methylthiazole: step 1/1. Catalyzes the phosphorylation of the hydroxyl group of 4-methyl-5-beta-hydroxyethylthiazole (THZ). This Leuconostoc mesenteroides subsp. mesenteroides (strain ATCC 8293 / DSM 20343 / BCRC 11652 / CCM 1803 / JCM 6124 / NCDO 523 / NBRC 100496 / NCIMB 8023 / NCTC 12954 / NRRL B-1118 / 37Y) protein is Hydroxyethylthiazole kinase 2.